The primary structure comprises 392 residues: Mycofactocin maturase MftC (392 aa).

The region spanning 18–228 (LDAPICLTWE…YDWLVAKGDR (211 aa)) is the Radical SAM core domain. Residues cysteine 32, cysteine 36, cysteine 39, cysteine 253, cysteine 260, cysteine 271, cysteine 312, cysteine 315, cysteine 321, cysteine 325, and cysteine 343 each contribute to the [4Fe-4S] cluster site. Basic and acidic residues predominate over residues 354 to 367 (KERVKPKPSGDHSR). A disordered region spans residues 354–377 (KERVKPKPSGDHSRGTKQGPVALK).

Belongs to the radical SAM superfamily. MftC family. It depends on [4Fe-4S] cluster as a cofactor.

The catalysed reaction is [mycofactocin precursor peptide]-C-terminal glycyl-L-valyl-L-tyrosine + S-adenosyl-L-methionine = [mycofactocin precursor peptide]-C-terminal glycyl-N-{[2-(4-hydroxyphenyl)ethenyl]-3-methylbutanamide} + 5'-deoxyadenosine + L-methionine + CO2. The enzyme catalyses [mycofactocin precursor peptide]-C-terminal glycyl-N-{[2-(4-hydroxyphenyl)ethenyl]-3-methylbutanamide} + AH2 + S-adenosyl-L-methionine = [mycofactocin precursor peptide]-C-terminal glycyl-N-{5-[(4-hydroxyphenyl)methyl]-4,4-dimethyl-2-oxopyrrolidin-3-yl}acetamide + 5'-deoxyadenosine + L-methionine + A + H(+). Its function is as follows. Radical S-adenosylmethionine (SAM) enzyme responsible for the first step of the biosynthesis of the enzyme cofactor mycofactocin (MFT). Catalyzes two reactions at the C-terminus of the mycofactocin precursor (the MftA peptide). The first one is the oxidative decarboxylation of the C-terminal L-tyrosine of MftA, forming an unsaturated tyramine moiety. The second reaction is the cross-linking of the tyramine with the penultimate L-valine residue, forming a five-membered lactam ring. Its activity requires the presence of the MftB chaperone. Is required for the in vivo ethanol assimilation in M.smegmatis. In Mycolicibacterium smegmatis (strain ATCC 700084 / mc(2)155) (Mycobacterium smegmatis), this protein is Mycofactocin maturase MftC.